A 262-amino-acid chain; its full sequence is Acyl-coenzyme A diphosphatase FITM2 (262 aa).

The Cytoplasmic portion of the chain corresponds to 1–23 (MEHLERCAWVLRGTLVRSAVRKY). A helical membrane pass occupies residues 24–44 (LPWALAASMLAGSLLKELSPL). Topologically, residues 45-57 (PESYLSNKRNVLN) are lumenal. The helical transmembrane segment at 58 to 78 (VYFVKVAWAWTFCLLLPFIAL) threads the bilayer. Topologically, residues 79–93 (TNYHLTGKAGLVLRR) are cytoplasmic. A helical transmembrane segment spans residues 94–114 (LSTLLVGTAIWYVCTAIFSNI). Residues 115-145 (EHYTGSCYQSPALEGERKEHQSKQQCHGEGG) are Lumenal-facing. The chain crosses the membrane as a helical span at residues 146–166 (FWHGFDISGHSFLLTFCALMI). Residue His-155 is part of the active site. Over 167 to 190 (VEEMAVLHEVKTDRNHCLHAAITT) the chain is Cytoplasmic. A helical membrane pass occupies residues 191–211 (LVVALGFLTFIWVWMFLCTAV). Topologically, residues 212–218 (YFHNLSQ) are lumenal. Residue His-214 is part of the active site. The helical transmembrane segment at 219-239 (KVFGTLFGLLGWYGTYGCWYL) threads the bilayer. Topologically, residues 240 to 262 (KSFSPGLPPQSSSLNLKQDTYKK) are cytoplasmic.

It belongs to the FIT family. FIT2 subfamily.

The protein localises to the endoplasmic reticulum membrane. The catalysed reaction is an acyl-CoA + H2O = an acyl-4'-phosphopantetheine + adenosine 3',5'-bisphosphate + 2 H(+). The enzyme catalyses (9Z)-octadecenoyl-CoA + H2O = S-(9Z-octadecenoyl)-4'-phosphopantetheine + adenosine 3',5'-bisphosphate + 2 H(+). It catalyses the reaction (5Z,8Z,11Z,14Z)-eicosatetraenoyl-CoA + H2O = S-(5Z,8Z,11Z,14Z-eicosatetraenoyl)-4'-phosphopantetheine + adenosine 3',5'-bisphosphate + 2 H(+). It carries out the reaction hexadecanoyl-CoA + H2O = S-hexadecanoyl-4'-phosphopantetheine + adenosine 3',5'-bisphosphate + 2 H(+). Fatty acyl-coenzyme A (CoA) diphosphatase that hydrolyzes fatty acyl-CoA to yield acyl-4'-phosphopantetheine and adenosine 3',5'-bisphosphate. Preferentially hydrolyzes unsaturated long-chain acyl-CoA substrates such as oleoyl-CoA/(9Z)-octadecenoyl-CoA and arachidonoyl-CoA/(5Z,8Z,11Z,14Z)-eicosatetraenoyl-CoA in the endoplasmic reticulum (ER) lumen. This catalytic activity is required for maintaining ER structure and for lipid droplets (LDs) biogenesis, which are lipid storage organelles involved in maintaining lipid and energy homeostasis. Directly binds to diacylglycerol (DAGs) and triacylglycerol, which is also important for LD biogenesis. May support directional budding of nacent LDs from the ER into the cytosol by reducing DAG levels at sites of LD formation. Plays a role in the regulation of cell morphology and cytoskeletal organization. The sequence is that of Acyl-coenzyme A diphosphatase FITM2 from Bos taurus (Bovine).